Reading from the N-terminus, the 457-residue chain is Beta-1,4-mannosyltransferase egh (457 aa).

A run of 6 helical transmembrane segments spans residues 8 to 28 (LLHC…SGGI), 35 to 55 (FTLV…LYLL), 57 to 77 (FLTL…VFYN), 346 to 366 (LLGI…NIIF), 378 to 398 (VDFV…FGVI), and 415 to 435 (VLGA…AVIW).

Belongs to the glycosyltransferase 2 family.

It localises to the membrane. Glycosyltransferase with a proposed role in glycosphingolipid biosynthesis. Neurogenic protein implicated in epithelial development. Critical component of a differential oocyte-follicle cell adhesive system. The protein is Beta-1,4-mannosyltransferase egh (egh) of Drosophila melanogaster (Fruit fly).